We begin with the raw amino-acid sequence, 712 residues long: Polyribonucleotide nucleotidyltransferase (712 aa).

D487 and D493 together coordinate Mg(2+). The KH domain occupies 554–613 (PKIITMTINPDKIRDVIGPSGKQINKIIEETGVKIDIEQDGTVFISSINQEMNDKAKKII). The 69-residue stretch at 623 to 691 (GEIYEGKVKR…KQGRVNLSRK (69 aa)) folds into the S1 motif domain.

The protein belongs to the polyribonucleotide nucleotidyltransferase family. Mg(2+) is required as a cofactor.

It is found in the cytoplasm. The catalysed reaction is RNA(n+1) + phosphate = RNA(n) + a ribonucleoside 5'-diphosphate. Involved in mRNA degradation. Catalyzes the phosphorolysis of single-stranded polyribonucleotides processively in the 3'- to 5'-direction. The protein is Polyribonucleotide nucleotidyltransferase of Bacillus anthracis (strain CDC 684 / NRRL 3495).